The sequence spans 109 residues: Putative transposase MJ0856.1 (109 aa).

Zn(2+) is bound by residues Cys-36, Cys-39, Cys-62, and Cys-65.

This sequence belongs to the transposase 35 family.

The protein is Putative transposase MJ0856.1 of Methanocaldococcus jannaschii (strain ATCC 43067 / DSM 2661 / JAL-1 / JCM 10045 / NBRC 100440) (Methanococcus jannaschii).